The sequence spans 287 residues: Protein REVEILLE 3 (287 aa).

Residues 56–110 (TITKSRENWTEQEHDKFLEALHLFDRDWKKIKAFVGSKTVIQIRSHAQKYFLKVQ) enclose the HTH myb-type domain. The segment at residues 83-106 (WKKIKAFVGSKTVIQIRSHAQKYF) is a DNA-binding region (H-T-H motif). The tract at residues 111–135 (KNGTKEHLPPPRPKRKANHPYPQKA) is disordered.

The protein resides in the nucleus. Its function is as follows. Probable transcription factor. This chain is Protein REVEILLE 3 (RVE3), found in Arabidopsis thaliana (Mouse-ear cress).